We begin with the raw amino-acid sequence, 853 residues long: Stachyose synthase (853 aa).

A propeptide spanning residues 1 to 11 (MAPPLNSTTSN) is cleaved from the precursor.

This sequence belongs to the glycosyl hydrolases 36 family.

It is found in the cytoplasm. The enzyme catalyses alpha-D-galactosyl-(1-&gt;3)-1D-myo-inositol + raffinose = stachyose + myo-inositol. It functions in the pathway glycan metabolism; stachyose biosynthesis; stachyose from raffinose: step 1/1. Its function is as follows. Catalyzes stachyose synthesis by transfer of a galactosyl moiety from galactinol to raffinose. Also catalyzes verbascose synthesis by galactosyl transfer from galactinol to stachyose or from one stachyose molecule to another. Oligosaccharides of the raffinose family play a protective role in maturation drying of seeds. They may act as cryoprotectants in frost-hardy plants. The chain is Stachyose synthase (STS1) from Pisum sativum (Garden pea).